A 90-amino-acid chain; its full sequence is Small ribosomal subunit protein bS18 (90 aa).

The protein belongs to the bacterial ribosomal protein bS18 family. As to quaternary structure, part of the 30S ribosomal subunit. Forms a tight heterodimer with protein bS6.

Its function is as follows. Binds as a heterodimer with protein bS6 to the central domain of the 16S rRNA, where it helps stabilize the platform of the 30S subunit. This is Small ribosomal subunit protein bS18 from Bacteroides fragilis (strain YCH46).